Here is a 153-residue protein sequence, read N- to C-terminus: Lipoprotein signal peptidase (153 aa).

3 helical membrane passes run 11–31 (ILIL…SLFV), 39–59 (DCID…FAFL), and 68–88 (LVLV…CYAI). Active-site residues include aspartate 112 and aspartate 129. A helical membrane pass occupies residues 122 to 142 (FAVFNFADVMIDVAVVWILLL).

It belongs to the peptidase A8 family.

The protein resides in the cell inner membrane. The catalysed reaction is Release of signal peptides from bacterial membrane prolipoproteins. Hydrolyzes -Xaa-Yaa-Zaa-|-(S,diacylglyceryl)Cys-, in which Xaa is hydrophobic (preferably Leu), and Yaa (Ala or Ser) and Zaa (Gly or Ala) have small, neutral side chains.. It participates in protein modification; lipoprotein biosynthesis (signal peptide cleavage). Functionally, this protein specifically catalyzes the removal of signal peptides from prolipoproteins. The chain is Lipoprotein signal peptidase from Sulfurimonas denitrificans (strain ATCC 33889 / DSM 1251) (Thiomicrospira denitrificans (strain ATCC 33889 / DSM 1251)).